A 235-amino-acid chain; its full sequence is NAD(P)H-hydrate epimerase (235 aa).

The region spanning 18-221 is the YjeF N-terminal domain; that stretch reads AAQIDEQLFT…SLVDEHELLM (204 aa). 65-69 contributes to the (6S)-NADPHX binding site; that stretch reads NNGGD. 2 residues coordinate K(+): Asn-66 and Asp-127. Residues 131–137 and Asp-160 contribute to the (6S)-NADPHX site; that span reads GFSFHPP. Ser-163 is a K(+) binding site.

The protein belongs to the NnrE/AIBP family. The cofactor is K(+).

It catalyses the reaction (6R)-NADHX = (6S)-NADHX. The catalysed reaction is (6R)-NADPHX = (6S)-NADPHX. Catalyzes the epimerization of the S- and R-forms of NAD(P)HX, a damaged form of NAD(P)H that is a result of enzymatic or heat-dependent hydration. This is a prerequisite for the S-specific NAD(P)H-hydrate dehydratase to allow the repair of both epimers of NAD(P)HX. The protein is NAD(P)H-hydrate epimerase of Caenorhabditis elegans.